The following is a 250-amino-acid chain: PF03932 family protein CutC (250 aa).

It belongs to the CutC family.

Its subcellular location is the cytoplasm. In Proteus mirabilis (strain HI4320), this protein is PF03932 family protein CutC.